Consider the following 867-residue polypeptide: Protein argonaute-3 (867 aa).

A necessary and sufficient for interaction with krimp region spans residues 1–83; it reads MSGRGNLLSL…IDTLKTDDHT (83 aa). The segment at 1 to 289 is interaction with papi; the sequence is MSGRGNLLSL…CDVSHRILCQ (289 aa). R4, R68, and R70 each carry symmetric dimethylarginine. In terms of domain architecture, PAZ spans 291–402; the sequence is TVLEMLVDLY…LIPELCYLTG (112 aa). Positions 566-853 constitute a Piwi domain; that stretch reads MVVCICHNRR…LAYLIGQSIQ (288 aa).

Belongs to the argonaute family. Piwi subfamily. Component of the ping-pong piRNA processing (4P) complex consisting of krimp, aub and AGO3. Interacts (via N-terminus when not methylated on arginine residues) with krimp (via non-canonical tudor domain); this interaction leads to symmetrical dimethylation on AGO3 arginine residues and its subsequent dissociation from krimp. Krimp associated AGO3 is mostly free of piRNA binding and the interaction plays an important role in the loading of AGO3 with piRNAs; piRNA binding may stimulate dissociation of the two proteins. May form part of a piRNA processing complex consisting of tud, aub and AGO3. Interacts (when symmetrically dimethylated on arginine residues) with tud. Forms a complex with smg, twin, aub, nos mRNA and piRNAs that target the nos 3'-untranslated region, in early embryos. Interacts (via the N-terminal region when symmetrically methylated on arginine residues) with papi (via C-terminus); this interaction is RNA-independent and may be required for AGO3 localization to the nuage. Interacts with TER94 and tral. Post-translationally, symmetrically dimethylated on Arg-4, Arg-68 and Arg-70, most likely by csul/PRMT5/DART5. Methylation state probably functions as an indicator of its piRNA binding state. As to expression, in ovary, expressed in germline stem cells, germline cyst cells, nurse cells and oocytes during early stages. Also found in the somatic cap cells of the germarium. In testis, expressed in germline stem cells, primary gonial cells and early spermatocytes. No expression detected in the somatic hub cells at the apical tip of the testis (at protein level). Expressed in neurons throughout the adult brain and in the mushroom body subdivision in the peduncle. In the mushroom body, expressed only in gamma and core alpha-beta neurons.

The protein resides in the cytoplasm. It is found in the perinuclear region. The protein localises to the cytoplasmic ribonucleoprotein granule. Component of the perinuclear meiotic nuage, a germline-specific subcellular membraneless ribonucleoprotein compartment involved in production of transposable element-repressing Piwi-interacting RNA (piRNA)-induced silencing complexes (piRISCs), which are essential for maintaining germline integrity during oogenesis. Acts via the Piwi-interacting RNA (piRNA) metabolic process, which mediates the repression of transposable elements during meiosis by forming complexes composed of piRNAs and Piwi proteins and governs the methylation and subsequent repression of transposons. Piwi protein that directly binds piRNAs, a class of 24 to 30 nucleotide RNAs that are generated by a Dicer-independent mechanism and are primarily derived from transposons and other repeated sequence elements. Associates predominantly with sense piRNAs that contain adenine at nucleotide 10, but shows no preference for uridine at the 5' end. Shows RNA cleavage or slicer activity. Together with Piwi protein aub recruited to subregions of the perinuclear nuage by krimp, which coordinates their activity in the ping-pong amplification step of secondary piRNA biogenesis. Krimp recruits piRNA bound aub and unbound AGO3, bringing them into close proximity to facilitate the loading onto AGO3 of freshly cut piRNAs generated by aub cleavage of target sequences; krimp recognizes the piRNA loading state of the Piwi proteins via symmetrically dimethylated arginine modification in their N-terminus. Important for asymmetric ping-pong amplification to bias production towards antisense piRNAs capable of silencing transposable elements. In testis, associates with Su(Ste) and AT-chX-1 piRNAs mostly produced from antisense precursors. In the germline, acts to amplify pools of antisense piRNAs, among others Su(Ste), AT-chX-1 and roo, and to limit sense piRNA accumulation. Forms a complex with smg, twin, aub and specific piRNAs that targets nos mRNA (and probably other maternal mRNAS) for deadenylation promoting its decay during early embryogenesis. Involved in transposon silencing in the adult brain. This is Protein argonaute-3 from Drosophila melanogaster (Fruit fly).